Consider the following 110-residue polypeptide: uncharacterized protein (110 aa).

The disordered stretch occupies residues 38-62 (SVQQNARAEEAEAAAPPAEEDSLPD).

This is an uncharacterized protein from Mus musculus (Mouse).